Consider the following 141-residue polypeptide: uncharacterized protein (141 aa).

A compositionally biased stretch (basic and acidic residues) spans 1–17 (MNKSESENDSEYHKEYS). A disordered region spans residues 1 to 24 (MNKSESENDSEYHKEYSESSDPED). Residues 52 to 115 (IQNLNNNVKE…QMLFEKMRDM (64 aa)) adopt a coiled-coil conformation.

This is an uncharacterized protein from Acanthamoeba polyphaga (Amoeba).